We begin with the raw amino-acid sequence, 142 residues long: Cytochrome c-type biogenesis protein CcmE (142 aa).

At 1–2 (MK) the chain is on the cytoplasmic side. The chain crosses the membrane as a helical; Signal-anchor for type II membrane protein span at residues 3 to 23 (GKYLLGILVILGALGYMVFGG). At 24–142 (LGRNLVYFLT…EVRKLIEEAQ (119 aa)) the chain is on the periplasmic side. Histidine 118 and tyrosine 122 together coordinate heme.

This sequence belongs to the CcmE/CycJ family.

Its subcellular location is the cell inner membrane. In terms of biological role, heme chaperone required for the biogenesis of c-type cytochromes. Transiently binds heme delivered by CcmC and transfers the heme to apo-cytochromes in a process facilitated by CcmF and CcmH. This is Cytochrome c-type biogenesis protein CcmE from Thermus thermophilus (strain ATCC 27634 / DSM 579 / HB8).